Consider the following 215-residue polypeptide: Glutathione S-transferase F9 (215 aa).

In terms of domain architecture, GST N-terminal spans 2–81; it reads VLKVYGPHFA…YVAEKYRSQG (80 aa). 11–12 serves as a coordination point for glutathione; it reads AS. S12 carries the post-translational modification Phosphoserine. M35 is subject to Methionine sulfoxide. Glutathione-binding positions include 39–40, 52–53, and 65–66; these read HK, TV, and ES. In terms of domain architecture, GST C-terminal spans 88–215; that stretch reads TVEDRGQVEQ…ETVAKYSFPA (128 aa). M118, M123, and M184 each carry methionine sulfoxide.

The protein belongs to the GST superfamily. Phi family. Oxidated at Met-35, Met-118, Met-123 and Met-184 in oxidative stress conditions (e.g. hydrogen peroxide H(2)O(2)).

It localises to the cytoplasm. It is found in the cytosol. The enzyme catalyses RX + glutathione = an S-substituted glutathione + a halide anion + H(+). Redox-regulated enzyme; in oxidative stress conditions methionine oxidation ensure a thermodynamic and structural compensatory mechanism to guarantee H(2)O(2) peroxidase activity despite transferase activity inhibition. In vitro, possesses glutathione S-transferase activity toward 1-chloro-2,4-dinitrobenzene (CDNB) and benzyl isothiocyanate (BITC), and glutathione peroxidase activity toward cumene hydroperoxide and linoleic acid-13-hydroperoxide. May be involved in the conjugation of reduced glutathione to a wide number of exogenous and endogenous hydrophobic electrophiles and have a detoxification role against certain herbicides. The protein is Glutathione S-transferase F9 of Arabidopsis thaliana (Mouse-ear cress).